Here is a 102-residue protein sequence, read N- to C-terminus: MNGQNIRIRLKAFDHRILDTSTKEIVSTAKRTGAHVRGPIPLPTKIEKFTVNRSPHVDKKSREQFEIRTHKRVLDIVDPTPQTVDALMKLDLAAGVDVEIKL.

Belongs to the universal ribosomal protein uS10 family. As to quaternary structure, part of the 30S ribosomal subunit.

Its function is as follows. Involved in the binding of tRNA to the ribosomes. This Methylocella silvestris (strain DSM 15510 / CIP 108128 / LMG 27833 / NCIMB 13906 / BL2) protein is Small ribosomal subunit protein uS10.